The primary structure comprises 311 residues: uncharacterized protein (311 aa).

This is an uncharacterized protein from Mycoplasma genitalium (strain ATCC 33530 / DSM 19775 / NCTC 10195 / G37) (Mycoplasmoides genitalium).